A 363-amino-acid polypeptide reads, in one-letter code: Dihydroorotate dehydrogenase (quinone) (363 aa).

FMN contacts are provided by residues 67–71 (AGYDK) and T91. K71 is a substrate binding site. 116 to 120 (NRMGF) contacts substrate. FMN contacts are provided by N145 and N178. Position 178 (N178) interacts with substrate. Residue S181 is the Nucleophile of the active site. N183 serves as a coordination point for substrate. Positions 224 and 254 each coordinate FMN. Residue 255 to 256 (NT) coordinates substrate. Residues G275, G304, and 325-326 (YS) each bind FMN.

This sequence belongs to the dihydroorotate dehydrogenase family. Type 2 subfamily. Monomer. The cofactor is FMN.

It localises to the cell membrane. It catalyses the reaction (S)-dihydroorotate + a quinone = orotate + a quinol. The protein operates within pyrimidine metabolism; UMP biosynthesis via de novo pathway; orotate from (S)-dihydroorotate (quinone route): step 1/1. Its function is as follows. Catalyzes the conversion of dihydroorotate to orotate with quinone as electron acceptor. The chain is Dihydroorotate dehydrogenase (quinone) from Acidithiobacillus ferrooxidans (strain ATCC 23270 / DSM 14882 / CIP 104768 / NCIMB 8455) (Ferrobacillus ferrooxidans (strain ATCC 23270)).